The sequence spans 476 residues: Exodeoxyribonuclease 7 large subunit (476 aa).

Belongs to the XseA family. Heterooligomer composed of large and small subunits.

It is found in the cytoplasm. It carries out the reaction Exonucleolytic cleavage in either 5'- to 3'- or 3'- to 5'-direction to yield nucleoside 5'-phosphates.. In terms of biological role, bidirectionally degrades single-stranded DNA into large acid-insoluble oligonucleotides, which are then degraded further into small acid-soluble oligonucleotides. The chain is Exodeoxyribonuclease 7 large subunit from Bartonella tribocorum (strain CIP 105476 / IBS 506).